Consider the following 446-residue polypeptide: Tubulin beta-1 chain (446 aa).

Residues Met1–Ile4 carry the MREI motif motif. Residues Gln11, Glu69, Ser138, Gly142, Thr143, Gly144, Asn204, and Asn226 each coordinate GTP. Glu69 lines the Mg(2+) pocket. Positions Gln426–Ala446 are disordered. Residues Thr429–Ala446 are compositionally biased toward acidic residues. 5-glutamyl polyglutamate is present on Glu438.

This sequence belongs to the tubulin family. In terms of assembly, dimer of alpha and beta chains. A typical microtubule is a hollow water-filled tube with an outer diameter of 25 nm and an inner diameter of 15 nM. Alpha-beta heterodimers associate head-to-tail to form protofilaments running lengthwise along the microtubule wall with the beta-tubulin subunit facing the microtubule plus end conferring a structural polarity. Microtubules usually have 13 protofilaments but different protofilament numbers can be found in some organisms and specialized cells. It depends on Mg(2+) as a cofactor. Post-translationally, some glutamate residues at the C-terminus are polyglycylated, resulting in polyglycine chains on the gamma-carboxyl group. Glycylation is mainly limited to tubulin incorporated into axonemes (cilia and flagella) whereas glutamylation is prevalent in neuronal cells, centrioles, axonemes, and the mitotic spindle. Both modifications can coexist on the same protein on adjacent residues, and lowering polyglycylation levels increases polyglutamylation, and reciprocally. The precise function of polyglycylation is still unclear. Some glutamate residues at the C-terminus are polyglutamylated, resulting in polyglutamate chains on the gamma-carboxyl group. Polyglutamylation plays a key role in microtubule severing by spastin (SPAST). SPAST preferentially recognizes and acts on microtubules decorated with short polyglutamate tails: severing activity by SPAST increases as the number of glutamates per tubulin rises from one to eight, but decreases beyond this glutamylation threshold. As to expression, brain.

It is found in the cytoplasm. The protein localises to the cytoskeleton. Its function is as follows. Tubulin is the major constituent of microtubules, a cylinder consisting of laterally associated linear protofilaments composed of alpha- and beta-tubulin heterodimers. Microtubules grow by the addition of GTP-tubulin dimers to the microtubule end, where a stabilizing cap forms. Below the cap, tubulin dimers are in GDP-bound state, owing to GTPase activity of alpha-tubulin. The polypeptide is Tubulin beta-1 chain (tubb1) (Notothenia neglecta (Yellowbelly rockcod)).